Here is a 99-residue protein sequence, read N- to C-terminus: Large ribosomal subunit protein uL23 (99 aa).

This sequence belongs to the universal ribosomal protein uL23 family. Part of the 50S ribosomal subunit. Contacts protein L29, and trigger factor when it is bound to the ribosome.

One of the early assembly proteins it binds 23S rRNA. One of the proteins that surrounds the polypeptide exit tunnel on the outside of the ribosome. Forms the main docking site for trigger factor binding to the ribosome. This Lachnospira eligens (strain ATCC 27750 / DSM 3376 / VPI C15-48 / C15-B4) (Eubacterium eligens) protein is Large ribosomal subunit protein uL23.